The following is a 154-amino-acid chain: MVALKGVPALLSPELLYALARMGHGDEIVLADLNFPASSICQCGPMEIRADGLGIPQLLEAVLKLLPLDTYVESPAAVMELVPSDKERGLQTPVWTEYESILRRAGCVRALAKIERFEFYERAKKAFAVVATGETALYGNLILRKGVLALNPLL.

His24 acts as the Proton donor in catalysis. Residue Asp32 coordinates substrate. Asp69 is an active-site residue. Substrate-binding residues include Met79, Tyr120, Tyr138, and Asn140. The active site involves Tyr120.

This sequence belongs to the RbsD / FucU family. Mainly homodimer, but also exists as homotetramer, homooctamer, and homodecamer. The homodimeric form seems catalytically inactive.

The enzyme catalyses alpha-L-fucose = beta-L-fucose. The protein operates within carbohydrate metabolism; L-fucose metabolism. Its function is as follows. Involved in the interconversion between alpha- and beta-L-fucoses. L-Fucose (6-deoxy-L-galactose) exists as alpha-L-fucose (29.5%) and beta-L-fucose (70.5%), the beta-form is metabolized through the salvage pathway. GDP-L-fucose formed either by the de novo or salvage pathways is transported into the endoplasmic reticulum, where it serves as a substrate for N- and O-glycosylations by fucosyltransferases. Fucosylated structures expressed on cell surfaces or secreted in biological fluids are believed to play a critical role in cell-cell adhesion and recognition processes. The polypeptide is Fucose mutarotase (FUOM) (Homo sapiens (Human)).